The sequence spans 339 residues: Phenylalanine--tRNA ligase alpha subunit (339 aa).

E254 contacts Mg(2+).

It belongs to the class-II aminoacyl-tRNA synthetase family. Phe-tRNA synthetase alpha subunit type 1 subfamily. Tetramer of two alpha and two beta subunits. Mg(2+) is required as a cofactor.

Its subcellular location is the cytoplasm. The enzyme catalyses tRNA(Phe) + L-phenylalanine + ATP = L-phenylalanyl-tRNA(Phe) + AMP + diphosphate + H(+). In Desulforudis audaxviator (strain MP104C), this protein is Phenylalanine--tRNA ligase alpha subunit.